Reading from the N-terminus, the 360-residue chain is UDP-N-acetylglucosamine--N-acetylmuramyl-(pentapeptide) pyrophosphoryl-undecaprenol N-acetylglucosamine transferase (360 aa).

Residues 15-17 (TGG), Asn124, Arg165, Ser191, and Gln285 contribute to the UDP-N-acetyl-alpha-D-glucosamine site.

Belongs to the glycosyltransferase 28 family. MurG subfamily.

The protein localises to the cell inner membrane. The catalysed reaction is di-trans,octa-cis-undecaprenyl diphospho-N-acetyl-alpha-D-muramoyl-L-alanyl-D-glutamyl-meso-2,6-diaminopimeloyl-D-alanyl-D-alanine + UDP-N-acetyl-alpha-D-glucosamine = di-trans,octa-cis-undecaprenyl diphospho-[N-acetyl-alpha-D-glucosaminyl-(1-&gt;4)]-N-acetyl-alpha-D-muramoyl-L-alanyl-D-glutamyl-meso-2,6-diaminopimeloyl-D-alanyl-D-alanine + UDP + H(+). Its pathway is cell wall biogenesis; peptidoglycan biosynthesis. Cell wall formation. Catalyzes the transfer of a GlcNAc subunit on undecaprenyl-pyrophosphoryl-MurNAc-pentapeptide (lipid intermediate I) to form undecaprenyl-pyrophosphoryl-MurNAc-(pentapeptide)GlcNAc (lipid intermediate II). This chain is UDP-N-acetylglucosamine--N-acetylmuramyl-(pentapeptide) pyrophosphoryl-undecaprenol N-acetylglucosamine transferase, found in Gloeothece citriformis (strain PCC 7424) (Cyanothece sp. (strain PCC 7424)).